A 1494-amino-acid polypeptide reads, in one-letter code: DNA-directed RNA polymerase subunit beta' (1494 aa).

Zn(2+) contacts are provided by Cys67, Cys69, Cys82, and Cys85. 3 residues coordinate Mg(2+): Asp499, Asp501, and Asp503. Positions 868, 944, 951, and 954 each coordinate Zn(2+).

This sequence belongs to the RNA polymerase beta' chain family. The RNAP catalytic core consists of 2 alpha, 1 beta, 1 beta' and 1 omega subunit. When a sigma factor is associated with the core the holoenzyme is formed, which can initiate transcription. It depends on Mg(2+) as a cofactor. Zn(2+) serves as cofactor.

The catalysed reaction is RNA(n) + a ribonucleoside 5'-triphosphate = RNA(n+1) + diphosphate. DNA-dependent RNA polymerase catalyzes the transcription of DNA into RNA using the four ribonucleoside triphosphates as substrates. The chain is DNA-directed RNA polymerase subunit beta' from Chlorobaculum parvum (strain DSM 263 / NCIMB 8327) (Chlorobium vibrioforme subsp. thiosulfatophilum).